The following is a 246-amino-acid chain: 2-deoxyglucose-6-phosphate phosphatase 2 (246 aa).

The active-site Nucleophile is D83. D83 serves as a coordination point for Mg(2+). Residues D83, E92, and 146–149 each bind substrate; that span reads DVKN. D183 contributes to the Mg(2+) binding site.

The protein belongs to the HAD-like hydrolase superfamily. DOG/GPP family. It depends on Mg(2+) as a cofactor.

The enzyme catalyses 2-deoxy-D-glucose 6-phosphate + H2O = 2-deoxy-D-glucose + phosphate. In terms of biological role, phosphatase that is active on 2-deoxy-D-glucose 6-phosphate (2-DOG-6P), but not very active on fructose-1-P. The chain is 2-deoxyglucose-6-phosphate phosphatase 2 from Saccharomyces cerevisiae (strain ATCC 204508 / S288c) (Baker's yeast).